The following is a 152-amino-acid chain: Transcriptional regulator MraZ (152 aa).

2 SpoVT-AbrB domains span residues A5–E52 and A81–A124.

Belongs to the MraZ family. As to quaternary structure, forms oligomers.

It is found in the cytoplasm. The protein localises to the nucleoid. The chain is Transcriptional regulator MraZ from Shewanella putrefaciens (strain CN-32 / ATCC BAA-453).